A 310-amino-acid chain; its full sequence is Protein A56 (310 aa).

The signal sequence occupies residues 1 to 16; that stretch reads MKQLSIVILLLSIVYT. Over 17–275 the chain is Virion surface; it reads TKPHPTQISK…TKYTTSDFIE (259 aa). The 103-residue stretch at 19–121 folds into the Ig-like V-type domain; it reads PHPTQISKKL…TNDTDKIDYE (103 aa). An intrachain disulfide couples cysteine 36 to cysteine 105. 3 N-linked (GlcNAc...) asparagine; by host glycosylation sites follow: asparagine 39, asparagine 113, and asparagine 133. The segment at 153-195 is disordered; sequence HTEEQHDSDTTICTSESTTQISETSESTTSSQISETSESTSYG. The segment covering 162–193 has biased composition (low complexity); it reads TTICTSESTTQISETSESTTSSQISETSESTS. The N-linked (GlcNAc...) asparagine; by host glycan is linked to asparagine 203. The helical transmembrane segment at 276 to 300 threads the bilayer; sequence IFGIVSLILLLAVAIFCIIYYFCSG. Residues 301–310 lie on the Intravirion side of the membrane; the sequence is RSRKQETNIL.

In terms of assembly, heterodimerizes with K2. The heterodimer A56/K2 interacts with components of the entry fusion complex A16 and G9. Interacts with K2 protein. Heterodimer with C3/VPC protein; disulfide-linked. Post-translationally, glycosylated; contains phosphate and sulfate-substituted glycans. O-glycosylation is required for hemagglutination and hemadsorption activities of infected cell membranes.

The protein localises to the virion membrane. Its subcellular location is the host membrane. Prevents cell to cell fusion by interacting with and directing the viral K2 protein on the host plasma membrane. The A56-K2 complex associates with components of the entry fusion complex (EFC) presumably to avoid superinfection and syncytium formation. Via its interaction with C3/VCP protein, protects the infected cell and probably also the extracellular enveloped virus from complement attack. This Raccoon poxvirus (RCN) protein is Protein A56 (HA).